A 230-amino-acid chain; its full sequence is Small ribosomal subunit protein uS3 (230 aa).

Positions 39–107 constitute a KH type-2 domain; sequence VRNYLRQKLA…PIHVNIEEIR (69 aa). A disordered region spans residues 210–230; sequence SSKPEHESKQRKAGRRNAAAN.

Belongs to the universal ribosomal protein uS3 family. In terms of assembly, part of the 30S ribosomal subunit. Forms a tight complex with proteins S10 and S14.

In terms of biological role, binds the lower part of the 30S subunit head. Binds mRNA in the 70S ribosome, positioning it for translation. The chain is Small ribosomal subunit protein uS3 from Neisseria gonorrhoeae (strain ATCC 700825 / FA 1090).